A 93-amino-acid chain; its full sequence is U12-lycotoxin-Ls1c (93 aa).

Positions 1–18 are cleaved as a signal peptide; sequence MKFAVILLFSLVVLAVAS. Positions 19-38 are excised as a propeptide; it reads ESVEEVRREIDIEDLPEQQR.

The protein belongs to the neurotoxin 31 family. Contains 5 disulfide bonds. In terms of tissue distribution, expressed by the venom gland.

The protein localises to the secreted. The protein is U12-lycotoxin-Ls1c of Lycosa singoriensis (Wolf spider).